The sequence spans 645 residues: MSLKLPRNWDFNLKVEAAKIARSRSVMTGEQMAAFHPSSTPNPLERPIKMGWLKKQRSIVKNWQQRYFVLRAQQLYYYKDEEDTKPQGCMYLPGCTIKEIATNPEEAGKFVFEIIPASWDQNRMGQDSYVLMASSQAEMEEWVKFLRRVAGTPCGVFGQRLDETVAYEQKFGPHLVPILVEKCAEFILEHGRNEEGIFRLPGQDNLVKQLRDAFDAGERPSFDRDTDVHTVASLLKLYLRDLPEPVVPWSQYEGFLLCGQLTNADEAKAQQELMKQLSILPRDNYSLLSYICRFLHEIQLNCAVNKMSVDNLATVIGVNLIRSKVEDPAVIMRGTPQIQRVMTMMIRDHEVLFPKSKDIPLSPPAQKNDPKKAPVARSSVGWDATEDLRISRTDSFSSMTSDSDTTSPTGQQPSDAFPEDSSKVPREKPGDWKMQSRKRTQTLPNRKCFLTSAFQGANSSKMEIFKNEFWSPSSEAKAGEGHRRTMSQDLRQLSDSQRTSTYDNVPSLPGSPGEEASALSSQACDSKGDTLASPNSETGPGKKNSGEEEIDSLQRMVQELRKEIETQKQMYEEQIKNLEKENYDVWAKVVRLNEELEKEKKKSAALEISLRNMERSREDVEKRNKALEEEVKEFVKSMKEPKTEA.

A PH domain is found at Arg46–Gly151. In terms of domain architecture, Rho-GAP spans Gln159–Phe353. Disordered stretches follow at residues Lys355–Pro444 and Phe469–Ile550. 2 positions are modified to phosphoserine: Ser362 and Ser395. Residues Thr393–Thr409 show a composition bias toward low complexity. The residue at position 406 (Thr406) is a Phosphothreonine. Basic and acidic residues predominate over residues Asp420 to Asp431. The span at Ser487–Asn504 shows a compositional bias: polar residues. Ser536 is subject to Phosphoserine. A coiled-coil region spans residues Gly541–Glu644.

Its function is as follows. GTPase activator for the Rho-type GTPases by converting them to an inactive GDP-bound state. The chain is Rho GTPase-activating protein 25 (ARHGAP25) from Homo sapiens (Human).